A 241-amino-acid polypeptide reads, in one-letter code: tRNA pseudouridine synthase A (241 aa).

The Nucleophile role is filled by D51. Y110 lines the substrate pocket.

This sequence belongs to the tRNA pseudouridine synthase TruA family. As to quaternary structure, homodimer.

The catalysed reaction is uridine(38/39/40) in tRNA = pseudouridine(38/39/40) in tRNA. Formation of pseudouridine at positions 38, 39 and 40 in the anticodon stem and loop of transfer RNAs. The chain is tRNA pseudouridine synthase A from Campylobacter jejuni subsp. jejuni serotype O:2 (strain ATCC 700819 / NCTC 11168).